Reading from the N-terminus, the 167-residue chain is MIGILNRWRQFGRRYFWPHLLLGMVAASFGLPQASAHDGTTLAETSARSLNIGSATRIDRLVMLQESARRSSFSVDYWHQHAIRTVIRHLSFSLTPSVSTVAATVPLEAHKLALLDTLNALLTHEARPPVIIRHTTQRQVSSSPRHHIGLWLAQVCGIRAGPPSALS.

The signal sequence occupies residues 1–36 (MIGILNRWRQFGRRYFWPHLLLGMVAASFGLPQASA).

Belongs to the SecM family.

The protein resides in the cytoplasm. It localises to the cytosol. It is found in the periplasm. Functionally, regulates secA expression by translational coupling of the secM secA operon. Translational pausing at a specific Pro residue 5 residues before the end of the protein may allow disruption of a mRNA repressor helix that normally suppresses secA translation initiation. This chain is Secretion monitor, found in Erwinia tasmaniensis (strain DSM 17950 / CFBP 7177 / CIP 109463 / NCPPB 4357 / Et1/99).